Consider the following 952-residue polypeptide: Inter-alpha-trypsin inhibitor heavy chain H5 (952 aa).

An N-terminal signal peptide occupies residues 1–17 (MLLLLGLCLGLPLFSES). A VIT domain is found at 35 to 161 (VPRQLRLLQR…KAAFFLSYEE (127 aa)). 4 N-linked (GlcNAc...) asparagine glycosylation sites follow: N97, N127, N136, and N231. The segment covering 113 to 131 (QKDKKSSESVKDKRNRTSD) has biased composition (basic and acidic residues). Residues 113–138 (QKDKKSSESVKDKRNRTSDDNEENGS) form a disordered region. A VWFA domain is found at 295-478 (NVVFVLDISA…AQLIGFYDEI (184 aa)). N-linked (GlcNAc...) asparagine glycans are attached at residues N508, N776, N795, and N862. The tract at residues 933–952 (ALGLSTPRKPETDRPHEESV) is disordered. Residues 940–952 (RKPETDRPHEESV) are compositionally biased toward basic and acidic residues.

The protein belongs to the ITIH family.

It localises to the secreted. Functionally, may act as a tumor suppressor. The chain is Inter-alpha-trypsin inhibitor heavy chain H5 (Itih5) from Mus musculus (Mouse).